The following is a 311-amino-acid chain: Tricarboxylate transport protein, mitochondrial (311 aa).

A propeptide spans 1 to 13 (MAAPRGPRALSAA) (removed in mature form). Residues 1 to 21 (MAAPRGPRALSAAAPGSGKPK) form a disordered region. Solcar repeat units lie at residues 23-111 (THPG…LSNH), 122-208 (RRGL…LRNW), and 218-303 (MNPL…VVKL). 3 helical membrane-spanning segments follow: residues 29-46 (ILAGGLAGGIEICITFPT), 86-105 (GLSSLLYGSIPKAAVRFGMF), and 129-143 (LGAGVAEAVVVVCPM). Ser156 carries the post-translational modification Phosphoserine. 3 consecutive transmembrane segments (helical) span residues 183-202 (GLTATVLKQGSNQAIRFFVM), 224-241 (GVFGATAGAASVFGNTPL), and 278-297 (GTVPRLGRVCLDVAIVFIIY).

It belongs to the mitochondrial carrier (TC 2.A.29) family. Post-translationally, possesses a short cleavable presequence, which, however, is found to be dispensable both for targeting to mitochondria and insertion into the inner membrane. However, the presequence is required to keep SLC25A1 in a soluble state and thus in an import-competent state. Mature SLC25A1 lacking the presequence is prone to aggregation. As to expression, expressed minimally but ubiquitously throughout the adult brain. Detected at higher levels in the olfactory bulb, neocortex and cerebellum. Also expressed in a subset of large cells in the globus pallidus.

It is found in the mitochondrion inner membrane. The protein resides in the mitochondrion membrane. The enzyme catalyses (S)-malate(in) + citrate(out) = (S)-malate(out) + citrate(in). The catalysed reaction is D-threo-isocitrate(in) + citrate(out) = D-threo-isocitrate(out) + citrate(in). It catalyses the reaction citrate(out) + succinate(in) = citrate(in) + succinate(out). It carries out the reaction cis-aconitate(in) + citrate(out) = cis-aconitate(out) + citrate(in). The enzyme catalyses trans-aconitate(in) + citrate(out) = trans-aconitate(out) + citrate(in). The catalysed reaction is phosphoenolpyruvate(in) + citrate(out) = phosphoenolpyruvate(out) + citrate(in). It catalyses the reaction maleate(in) + citrate(out) = maleate(out) + citrate(in). Its function is as follows. Mitochondrial electroneutral antiporter that exports citrate from the mitochondria into the cytosol in exchange for malate. Also able to mediate the exchange of citrate for isocitrate, phosphoenolpyruvate, cis-aconitate and to a lesser extent trans-aconitate, maleate and succinate. In the cytoplasm, citrate plays important roles in fatty acid and sterol synthesis, regulation of glycolysis, protein acetylation, and other physiopathological processes. This is Tricarboxylate transport protein, mitochondrial from Mus musculus (Mouse).